We begin with the raw amino-acid sequence, 308 residues long: MPTVMPDVANQTQAQTEGALDWVGMSNIEVPLMVAAAGVPERPVAAKVEAFVNLKNPKTKGIHMSRLYLLLDKMSTEGELSHDTLKQLLNDFIESHKDISDQAFIKFDFDYHLRRKSLISKKQGWKAYPVSLTGRYDAGQLKLELSVDVPYSSTCPCSAALARQLIQDAFSEKFAGQEQVDASIMHEWLGSTEGIVATPHSQRSVAEVKVALSDSVNDFPIVELIDAIEGALKTPVQAAVKREDEQEFARLNGQNLMFCEDASRRLQHQLNQMSNFRDFWLRVNHYESLHAHDAVSVTTKGVPGGYSA.

The protein belongs to the GTP cyclohydrolase IV family.

The catalysed reaction is GTP + H2O = 7,8-dihydroneopterin 3'-triphosphate + formate + H(+). The protein operates within cofactor biosynthesis; 7,8-dihydroneopterin triphosphate biosynthesis; 7,8-dihydroneopterin triphosphate from GTP: step 1/1. In terms of biological role, converts GTP to 7,8-dihydroneopterin triphosphate. This is GTP cyclohydrolase FolE2 from Idiomarina loihiensis (strain ATCC BAA-735 / DSM 15497 / L2-TR).